The following is a 728-amino-acid chain: UvrABC system protein C (728 aa).

The region spanning 16-95 (DSPGVYRFRD…IKEYDPRFNV (80 aa)) is the GIY-YIG domain. The UVR domain maps to 208–243 (GTYLRRLERQMAEAAEEMEYERAARLRDDIGALKKA). Disordered regions lie at residues 473–535 (ADGE…GRPK) and 689–728 (VNTATGEIMDDDDGAPETTADAPGEPVSAGTPDERRGQER). A compositionally biased stretch (low complexity) spans 487 to 505 (GDAAPNGDAAPNDGAAPDD).

The protein belongs to the UvrC family. Interacts with UvrB in an incision complex.

It is found in the cytoplasm. Its function is as follows. The UvrABC repair system catalyzes the recognition and processing of DNA lesions. UvrC both incises the 5' and 3' sides of the lesion. The N-terminal half is responsible for the 3' incision and the C-terminal half is responsible for the 5' incision. The chain is UvrABC system protein C from Streptomyces coelicolor (strain ATCC BAA-471 / A3(2) / M145).